An 806-amino-acid polypeptide reads, in one-letter code: Breast cancer anti-estrogen resistance protein 3 homolog (806 aa).

An SH2 domain is found at 152–251; that stretch reads WYHGRIPRQV…QSGAIIFQPI (100 aa). 2 disordered regions span residues 308 to 343 and 390 to 412; these read RNKE…PLGS and RGSD…SIKQ. A Ras-GEF domain is found at 538–805; sequence DPRTIAKHIL…TALSRKLEPP (268 aa).

Functionally, may act as an adapter protein. The chain is Breast cancer anti-estrogen resistance protein 3 homolog (bcar3) from Xenopus laevis (African clawed frog).